The sequence spans 872 residues: FHIP family protein CBG19667 (872 aa).

Positions 800-841 are disordered; the sequence is SRSSPRSADEHDSTLFYGRSTIPPPGRKPLLREPSHQETLDD. Residues 829-841 show a composition bias toward basic and acidic residues; sequence LLREPSHQETLDD.

This sequence belongs to the FHIP family.

The polypeptide is FHIP family protein CBG19667 (Caenorhabditis briggsae).